The primary structure comprises 195 residues: dCTP deaminase (195 aa).

DCTP is bound by residues 109-114 (RSSLAR), Asp127, 135-137 (TLE), Tyr170, Lys177, and Gln181. The Proton donor/acceptor role is filled by Glu137.

It belongs to the dCTP deaminase family. As to quaternary structure, homotrimer.

The catalysed reaction is dCTP + H2O + H(+) = dUTP + NH4(+). Its pathway is pyrimidine metabolism; dUMP biosynthesis; dUMP from dCTP (dUTP route): step 1/2. Functionally, catalyzes the deamination of dCTP to dUTP. In Rhodospirillum rubrum (strain ATCC 11170 / ATH 1.1.1 / DSM 467 / LMG 4362 / NCIMB 8255 / S1), this protein is dCTP deaminase.